We begin with the raw amino-acid sequence, 180 residues long: Beta-lactoglobulin (180 aa).

Positions 1-18 are cleaved as a signal peptide; the sequence is MKCLLLALGLALACGIQA. Disulfide bonds link Cys-84/Cys-178, Cys-124/Cys-137, and Cys-124/Cys-139.

Belongs to the calycin superfamily. Lipocalin family. In terms of assembly, under physiological conditions beta-lactoglobulin exists as an equilibrium mixture of monomeric and dimeric forms. Interaction with LMBR1L is controversial. Post-translationally, alternate disulfide bonds occur in equal amounts. In terms of tissue distribution, synthesized in mammary gland and secreted in milk.

It localises to the secreted. In terms of biological role, primary component of whey, it binds retinol and is probably involved in the transport of that molecule. This chain is Beta-lactoglobulin (LGB), found in Capra hircus (Goat).